Reading from the N-terminus, the 158-residue chain is SH3 domain-binding glutamic acid-rich protein homolog (158 aa).

The segment covering 40 to 51 has biased composition (basic and acidic residues); sequence TEPGKESEKELM. Residues 40–74 form a disordered region; that stretch reads TEPGKESEKELMQNKSTSNGGTVSDPEPRHPLPPQ. Polar residues predominate over residues 52–61; that stretch reads QNKSTSNGGT. Positions 67–73 match the SH3-binding motif; it reads PRHPLPP. Threonine 109 carries the phosphothreonine modification. Residues 118 to 158 are disordered; that stretch reads LKQENGDAKKEEAETEAEDKKTEAGDGDVDVKEEAAEKAEV.

Belongs to the SH3BGR family.

The chain is SH3 domain-binding glutamic acid-rich protein homolog (Sh3beta) from Drosophila melanogaster (Fruit fly).